We begin with the raw amino-acid sequence, 255 residues long: Thiazole synthase (255 aa).

K95 serves as the catalytic Schiff-base intermediate with DXP. 1-deoxy-D-xylulose 5-phosphate-binding positions include G156, 182-183 (AG), and 204-205 (NT).

It belongs to the ThiG family. As to quaternary structure, homotetramer. Forms heterodimers with either ThiH or ThiS.

It is found in the cytoplasm. The catalysed reaction is [ThiS sulfur-carrier protein]-C-terminal-Gly-aminoethanethioate + 2-iminoacetate + 1-deoxy-D-xylulose 5-phosphate = [ThiS sulfur-carrier protein]-C-terminal Gly-Gly + 2-[(2R,5Z)-2-carboxy-4-methylthiazol-5(2H)-ylidene]ethyl phosphate + 2 H2O + H(+). It participates in cofactor biosynthesis; thiamine diphosphate biosynthesis. Its function is as follows. Catalyzes the rearrangement of 1-deoxy-D-xylulose 5-phosphate (DXP) to produce the thiazole phosphate moiety of thiamine. Sulfur is provided by the thiocarboxylate moiety of the carrier protein ThiS. In vitro, sulfur can be provided by H(2)S. The polypeptide is Thiazole synthase (Vibrio parahaemolyticus serotype O3:K6 (strain RIMD 2210633)).